The chain runs to 61 residues: SPbeta prophage-derived uncharacterized protein YotK (61 aa).

Residues 7–57 (SIQTLLNKMDRQMKTVKEAIEEKDLQRAHRNLINLADNNEELMQEIRWVKK) adopt a coiled-coil conformation.

The sequence is that of SPbeta prophage-derived uncharacterized protein YotK (yotK) from Bacillus subtilis (strain 168).